The primary structure comprises 805 residues: MPNQGEDCYFFFYSTCTKGDSCPFRHCEAALGNETVCTLWQEGRCFRRVCRFRHMEIDKKRSEIPCYWENQPTGCQKLNCVFHHNRGRYVDGLFLPPSKSVLPTVPESPEEEVKASQLSVQQNKLSVQSNTSPQLRSVMKVESSENVPSPKHPPVVINAADDDEDDDDQFSEEGDETKTPTLQPTPEVHNGLRVTSVRKPAVNIKQGECLHFGIKTLEEIKSKKMKEKSEEQGEGSSGVSSLLLHPEPVPGPEKENVRTVVRTVTLSTKQGEEPLVRLGLTETLGKRKFSTGGDSDPPLKRSLAQRLGKKVEAPETNTDETPKKAQVSKSLKERLGMSADPNNEDATDKVNKVGEIHVKTLEEMLLERASQKHGESQTKLKTEGPSKTDDSTSGARSSSTIRIKTFSEVLAEEEHRQQEAERQKSKKDTTCIKLKTDSEIKKTVVLPPIVASKGQSEEPAGKTKSMQEVHMKTVEEIKLEKALRVQQSSESSTSSPSQHEATPGARLLLRITKRTWRKEEKKLQEGNEVDFLSRVRMEATEASVETTGVDITKIQVKRCEIMRETRMQKQQEREKSVLTPLQGDVASCNTQVAEKPVLTAVPGITWHLTKQLPTKSSQKVEVETSGIADSLLNVKWSAQTLEKRGEAKPTVNVKQSVVKVVSSPKLAPKRKAVEMHPAVTAAVKPLSSSSVLQEPPAKKAAVDAVVLLDSEDKSVTVPEAENPRDSLVLPPTQSSSDSSPPEVSGPSSSQMSMKTRRLSSASTGKPPLSVEDDFEKLTWEISGGKLEAEIDLDPGKDEDDLPLEL.

2 C3H1-type zinc fingers span residues 2-29 (PNQGEDCYFFFYSTCTKGDSCPFRHCEA) and 31-57 (LGNETVCTLWQEGRCFRRVCRFRHMEI). 6 disordered regions span residues 140–194 (KVES…GLRV), 223–351 (KKMK…DKVN), 364–433 (MLLE…TCIK), 449–468 (IVASKGQSEEPAGKTKSMQE), 481–506 (KALRVQQSSESSTSSPSQHEATPGAR), and 715–805 (VTVP…PLEL). Over residues 160 to 175 (ADDDEDDDDQFSEEGD) the composition is skewed to acidic residues. Basic and acidic residues predominate over residues 364–390 (MLLERASQKHGESQTKLKTEGPSKTDD). The span at 391–402 (STSGARSSSTIR) shows a compositional bias: polar residues. Positions 403 to 423 (IKTFSEVLAEEEHRQQEAERQ) form a coiled coil. Basic and acidic residues-rich tracts occupy residues 412-433 (EEEHRQQEAERQKSKKDTTCIK) and 455-468 (QSEEPAGKTKSMQE). 2 stretches are compositionally biased toward low complexity: residues 486–498 (QQSSESSTSSPSQ) and 730–749 (PPTQSSSDSSPPEVSGPSSS). A compositionally biased stretch (polar residues) spans 750-763 (QMSMKTRRLSSAST). Acidic residues predominate over residues 789–805 (EIDLDPGKDEDDLPLEL).

Its function is as follows. May play a role in mRNA transport. The protein is Zinc finger CCCH domain-containing protein 11B of Homo sapiens (Human).